The following is a 262-amino-acid chain: tRNA U34 carboxymethyltransferase (262 aa).

Residues Lys-25, Trp-39, Lys-44, Gly-63, 114 to 115, Tyr-135, and Arg-250 contribute to the carboxy-S-adenosyl-L-methionine site; that span reads VE.

This sequence belongs to the class I-like SAM-binding methyltransferase superfamily. CmoB family. As to quaternary structure, homotetramer.

The enzyme catalyses carboxy-S-adenosyl-L-methionine + 5-hydroxyuridine(34) in tRNA = 5-carboxymethoxyuridine(34) in tRNA + S-adenosyl-L-homocysteine + H(+). Its function is as follows. Catalyzes carboxymethyl transfer from carboxy-S-adenosyl-L-methionine (Cx-SAM) to 5-hydroxyuridine (ho5U) to form 5-carboxymethoxyuridine (cmo5U) at position 34 in tRNAs. The chain is tRNA U34 carboxymethyltransferase from Helicobacter acinonychis (strain Sheeba).